The following is a 598-amino-acid chain: Eukaryotic translation initiation factor 3 subunit D (598 aa).

The interval 104–178 (VKTRGFGRGG…YDKPQRNRDS (75 aa)) is disordered. A compositionally biased stretch (gly residues) spans 109 to 132 (FGRGGGTIFRGRGQRGGAQRGRGG). A compositionally biased stretch (basic and acidic residues) spans 165-177 (GWKDYDKPQRNRD). An RNA gate region spans residues 304–318 (SIDLVTVNENAADAP). Residues 574 to 598 (NTFEEEDDTGAKAEKDEESEEKDEE) form a disordered region. The segment covering 589 to 598 (DEESEEKDEE) has biased composition (acidic residues).

The protein belongs to the eIF-3 subunit D family. In terms of assembly, component of the eukaryotic translation initiation factor 3 (eIF-3) complex.

The protein localises to the cytoplasm. Functionally, mRNA cap-binding component of the eukaryotic translation initiation factor 3 (eIF-3) complex, which is involved in protein synthesis of a specialized repertoire of mRNAs and, together with other initiation factors, stimulates binding of mRNA and methionyl-tRNAi to the 40S ribosome. The eIF-3 complex specifically targets and initiates translation of a subset of mRNAs involved in cell proliferation. In the eIF-3 complex, eif3d specifically recognizes and binds the 7-methylguanosine cap of a subset of mRNAs. This chain is Eukaryotic translation initiation factor 3 subunit D, found in Coccidioides immitis (strain RS) (Valley fever fungus).